The sequence spans 89 residues: Small ribosomal subunit protein uS15 (89 aa).

Belongs to the universal ribosomal protein uS15 family. In terms of assembly, part of the 30S ribosomal subunit. Forms a bridge to the 50S subunit in the 70S ribosome, contacting the 23S rRNA.

Its function is as follows. One of the primary rRNA binding proteins, it binds directly to 16S rRNA where it helps nucleate assembly of the platform of the 30S subunit by binding and bridging several RNA helices of the 16S rRNA. Functionally, forms an intersubunit bridge (bridge B4) with the 23S rRNA of the 50S subunit in the ribosome. The polypeptide is Small ribosomal subunit protein uS15 (Beutenbergia cavernae (strain ATCC BAA-8 / DSM 12333 / CCUG 43141 / JCM 11478 / NBRC 16432 / NCIMB 13614 / HKI 0122)).